The chain runs to 307 residues: Bifunctional protein FolD 3 (307 aa).

Residues 169 to 171, Ser194, and Ile235 contribute to the NADP(+) site; that span reads GRS.

The protein belongs to the tetrahydrofolate dehydrogenase/cyclohydrolase family. In terms of assembly, homodimer.

The catalysed reaction is (6R)-5,10-methylene-5,6,7,8-tetrahydrofolate + NADP(+) = (6R)-5,10-methenyltetrahydrofolate + NADPH. It carries out the reaction (6R)-5,10-methenyltetrahydrofolate + H2O = (6R)-10-formyltetrahydrofolate + H(+). Its pathway is one-carbon metabolism; tetrahydrofolate interconversion. Its function is as follows. Catalyzes the oxidation of 5,10-methylenetetrahydrofolate to 5,10-methenyltetrahydrofolate and then the hydrolysis of 5,10-methenyltetrahydrofolate to 10-formyltetrahydrofolate. The chain is Bifunctional protein FolD 3 from Ectopseudomonas mendocina (strain ymp) (Pseudomonas mendocina).